The sequence spans 209 residues: MARYQGPVCRLCRREGTKLFLKGERCYTDKCAIDKKAYAPGQHGPTRRSKQSEYGMQLREKQKARRIYGVLENQFRRYFREADRKKGITGQTLLRLLETRLDNVVYRMGFAASRAEARQFVNHGHIMVNGKRVNVASYEVKPGDEVVVREKSRDIPRVQELKELAEGYRVPEWLEADHENFTGRVVRYPEREEIDVPVEEHLIVELYSR.

In terms of domain architecture, S4 RNA-binding spans 99–164 (TRLDNVVYRM…IPRVQELKEL (66 aa)).

The protein belongs to the universal ribosomal protein uS4 family. Part of the 30S ribosomal subunit. Contacts protein S5. The interaction surface between S4 and S5 is involved in control of translational fidelity.

Its function is as follows. One of the primary rRNA binding proteins, it binds directly to 16S rRNA where it nucleates assembly of the body of the 30S subunit. In terms of biological role, with S5 and S12 plays an important role in translational accuracy. This chain is Small ribosomal subunit protein uS4, found in Natranaerobius thermophilus (strain ATCC BAA-1301 / DSM 18059 / JW/NM-WN-LF).